The following is a 1486-amino-acid chain: Chromosome partition protein MukB (1486 aa).

Residue 34-41 participates in ATP binding; that stretch reads GGNGAGKS. 3 coiled-coil regions span residues 326–418, 444–480, and 509–603; these read LEAD…QYNQ, LETF…QAYQ, and RHLA…RAPV. Residues 666-783 are flexible hinge; that stretch reads PGGSEDQRLN…EVPLFGRAAR (118 aa). 3 coiled-coil regions span residues 835 to 923, 977 to 1115, and 1209 to 1266; these read EAEI…AKLE, EMLS…TAKA, and VEAI…QNVS.

It belongs to the SMC family. MukB subfamily. Homodimerization via its hinge domain. Binds to DNA via its C-terminal region. Interacts, and probably forms a ternary complex, with MukE and MukF via its C-terminal region. The complex formation is stimulated by calcium or magnesium. Interacts with tubulin-related protein FtsZ.

The protein resides in the cytoplasm. The protein localises to the nucleoid. Its function is as follows. Plays a central role in chromosome condensation, segregation and cell cycle progression. Functions as a homodimer, which is essential for chromosome partition. Involved in negative DNA supercoiling in vivo, and by this means organize and compact chromosomes. May achieve or facilitate chromosome segregation by condensation DNA from both sides of a centrally located replisome during cell division. The polypeptide is Chromosome partition protein MukB (Escherichia coli O17:K52:H18 (strain UMN026 / ExPEC)).